The sequence spans 574 residues: Sulfate adenylyltransferase (574 aa).

The tract at residues 1–169 (MANTPHGGVL…IEAVNKLNHY (169 aa)) is N-terminal. The tract at residues 170 to 394 (DYVALRYTPA…LRESNPPRAS (225 aa)) is catalytic. A sulfate-binding site is contributed by glutamine 197. Residues 197–200 (QTRN) and 291–294 (GRDH) contribute to the ATP site. Active-site residues include threonine 198, arginine 199, and asparagine 200. Arginine 199 lines the sulfate pocket. Alanine 295 is a sulfate binding site. Valine 333 lines the ATP pocket. Positions 395-574 (QGFTIFLTGY…LESEGYFERL (180 aa)) are allosteric regulation domain; adenylyl-sulfate kinase-like. 3'-phosphoadenylyl sulfate is bound by residues 434 to 437 (DTVR), arginine 451, 477 to 478 (IA), and arginine 516.

In the N-terminal section; belongs to the sulfate adenylyltransferase family. The protein in the C-terminal section; belongs to the APS kinase family. As to quaternary structure, homohexamer. Dimer of trimers.

It is found in the cytoplasm. It catalyses the reaction sulfate + ATP + H(+) = adenosine 5'-phosphosulfate + diphosphate. The protein operates within sulfur metabolism; hydrogen sulfide biosynthesis; sulfite from sulfate: step 1/3. Its activity is regulated as follows. Allosterically inhibited by 3'-phosphoadenosine 5'-phosphosulfate (PAPS). Catalyzes the first intracellular reaction of sulfate assimilation, forming adenosine-5'-phosphosulfate (APS) from inorganic sulfate and ATP. Plays an important role in sulfate activation as a component of the biosynthesis pathway of sulfur-containing amino acids. The protein is Sulfate adenylyltransferase of Aspergillus niger.